The primary structure comprises 600 residues: DNA primase (600 aa).

Residues 38 to 62 form a CHC2-type zinc finger; the sequence is CPFHDEKTPSFIVYPTRGHYHCYGC. Residues 253 to 333 form the Toprim domain; the sequence is KRVILVEGQA…GIAVIVCRLP (81 aa). Positions 259, 304, and 306 each coordinate Mg(2+).

The protein belongs to the DnaG primase family. As to quaternary structure, monomer. Interacts with DnaB. Zn(2+) serves as cofactor. Requires Mg(2+) as cofactor.

It catalyses the reaction ssDNA + n NTP = ssDNA/pppN(pN)n-1 hybrid + (n-1) diphosphate.. RNA polymerase that catalyzes the synthesis of short RNA molecules used as primers for DNA polymerase during DNA replication. The polypeptide is DNA primase (Chlamydia muridarum (strain MoPn / Nigg)).